Reading from the N-terminus, the 350-residue chain is Small ribosomal subunit biogenesis GTPase RsgA (350 aa).

Residues 1–17 (MSKNKLSKGQQRRVNAN) show a composition bias toward polar residues. The segment at 1–33 (MSKNKLSKGQQRRVNANHQRRLKTSKEKPDYDD) is disordered. The CP-type G domain occupies 104–273 (TSVLTRPDFY…VIDSPGVREF (170 aa)). GTP-binding positions include 160–163 (NKID) and 214–222 (GQSGVGKSS). Residues Cys297, Cys302, His304, and Cys310 each contribute to the Zn(2+) site.

It belongs to the TRAFAC class YlqF/YawG GTPase family. RsgA subfamily. As to quaternary structure, monomer. Associates with 30S ribosomal subunit, binds 16S rRNA. It depends on Zn(2+) as a cofactor.

The protein resides in the cytoplasm. One of several proteins that assist in the late maturation steps of the functional core of the 30S ribosomal subunit. Helps release RbfA from mature subunits. May play a role in the assembly of ribosomal proteins into the subunit. Circularly permuted GTPase that catalyzes slow GTP hydrolysis, GTPase activity is stimulated by the 30S ribosomal subunit. The sequence is that of Small ribosomal subunit biogenesis GTPase RsgA from Escherichia coli (strain SMS-3-5 / SECEC).